A 563-amino-acid chain; its full sequence is NADPH oxidase 1 (563 aa).

Over 1–8 (MGNWLVNH) the chain is Cytoplasmic. A helical membrane pass occupies residues 9 to 31 (WLSVLFLVSWLGLNIFLFVYVFL). Residues 32–44 (NYEKSDKYYYTRE) lie on the Extracellular side of the membrane. The helical transmembrane segment at 45 to 69 (ILGTALALARASALCLNFNSMVILI) threads the bilayer. The Ferric oxidoreductase domain maps to 54-282 (RASALCLNFN…LAPIAFYIFE (229 aa)). At 70–102 (PVCRNLLSFLRGTCSFCNHTLRKPLDHNLTFHK) the chain is on the cytoplasmic side. Heme-binding residues include histidine 101 and histidine 115. A helical membrane pass occupies residues 103 to 123 (LVAYMICIFTAIHIIAHLFNF). Topologically, residues 124–167 (ERYSRSQQAMDGSLASVLSSLFHPEKEDSWLNPIQSPNVTVMYA) are extracellular. N-linked (GlcNAc...) asparagine glycosylation occurs at asparagine 161. A helical membrane pass occupies residues 168–188 (AFTSIAGLTGVVATVALVLMV). Over 189 to 206 (TSAMEFIRRNYFELFWYT) the chain is Cytoplasmic. Residues 207–227 (HHLFIIYIICLGIHGLGGIVR) traverse the membrane as a helical segment. Heme-binding residues include histidine 208 and histidine 220. Residues 228–395 (GQTEESMSES…TVSEDVFQYE (168 aa)) are Extracellular-facing. N-linked (GlcNAc...) asparagine glycosylation occurs at asparagine 241. The region spanning 283 to 390 (RILRFYRSRQ…DGPFGTVSED (108 aa)) is the FAD-binding FR-type domain. Residue 337 to 343 (HPFTLTS) participates in FAD binding. The chain crosses the membrane as a helical span at residues 396–416 (VAVLVGAGIGVTPFASFLKSI). Residues 396–535 (VAVLVGAGIG…GVFLCGPPTL (140 aa)) are interaction with NOXO1. The Cytoplasmic portion of the chain corresponds to 417 to 563 (WYKFQRAHNK…VQFYFNKETF (147 aa)). Phosphothreonine; by PKC/PRKCB is present on threonine 429.

NOX1, NOXA1, NOXO1, RAC1 and CYBA forms a functional multimeric complex supporting ROS production. Interacts with NOXO1. Interacts (via FAD-binding FR-type domain) with ARHGEF7 (via PH domain). The phosphorylated form at Thr-429 interacts with NOXA1 with greater affinity. It depends on FAD as a cofactor. In terms of processing, phosphorylation at Thr-429 mediated by PKC/PRKBC positively regulates its interaction with NOXA1 and enzyme activity. As to expression, expressed in vascular smooth muscle cells.

It localises to the cell projection. It is found in the invadopodium membrane. The protein resides in the cell membrane. The enzyme catalyses NADPH + 2 O2 = 2 superoxide + NADP(+) + H(+). The oxidase activity is potentiated by NOXA1 and NOXO1. In terms of biological role, NADPH oxidase that catalyzes the generation of superoxide from molecular oxygen utilizing NADPH as an electron donor. The polypeptide is NADPH oxidase 1 (Nox1) (Rattus norvegicus (Rat)).